The sequence spans 1582 residues: Dynein axonemal assembly factor 1 homolog (1582 aa).

LRR repeat units follow at residues 38–60 (RLND…DEYT), 61–82 (ELKS…TKLT), 83–104 (KLKC…EFNR), 105–126 (ELDT…GTDI), 129–150 (VLNT…AALV), and 154–175 (TLSV…KIFE). An LRRCT domain is found at 189–227 (PVVSRLPQYRKTLILACKELTYLDSRPVFPRDRACAEAW). Disordered stretches follow at residues 245-420 (AERR…SEMD), 560-587 (SSDV…VKSQ), 859-878 (FSKD…EDRR), 913-942 (DTGE…DDDA), 1073-1092 (SSNE…LVER), 1101-1137 (MQRM…MGEG), 1150-1218 (TEII…QAEG), 1305-1345 (KDNE…TAKD), 1358-1438 (LDPE…PYQT), 1484-1517 (EDSK…NPKN), and 1529-1548 (PSES…STEQ). The span at 313-327 (ESQASEHSTTSSTSA) shows a compositional bias: low complexity. Positions 339 to 392 (HIAERISNRRVKPLEGRPKVLYDEAASGDEKAVTTTDSKKDSNAEDLPELKDIT) are enriched in basic and acidic residues. Positions 409–420 (TLLQSDSGSEMD) are enriched in polar residues. The span at 572–582 (ESDEEPTEEEM) shows a compositional bias: acidic residues. Acidic residues predominate over residues 928–942 (SDSESEKEVEEDDDA). Composition is skewed to basic and acidic residues over residues 1078 to 1092 (LEAK…LVER) and 1103 to 1125 (RMKE…KEEE). Residues 1166–1178 (EGGAQQEEGGAQS) are compositionally biased toward low complexity. Basic and acidic residues-rich tracts occupy residues 1321–1335 (PKEE…ETET), 1398–1427 (SALK…KDTE), and 1484–1514 (EDSK…RPEN). The span at 1529–1540 (PSESLEDTEATE) shows a compositional bias: acidic residues.

Belongs to the DNAAF1 family.

It localises to the cell projection. The protein resides in the cilium. Cilium-specific protein required for cilia structures. In Drosophila pseudoobscura pseudoobscura (Fruit fly), this protein is Dynein axonemal assembly factor 1 homolog (dtr).